The sequence spans 176 residues: Protein GrpE (176 aa).

This sequence belongs to the GrpE family. Homodimer.

Its subcellular location is the cytoplasm. In terms of biological role, participates actively in the response to hyperosmotic and heat shock by preventing the aggregation of stress-denatured proteins, in association with DnaK and GrpE. It is the nucleotide exchange factor for DnaK and may function as a thermosensor. Unfolded proteins bind initially to DnaJ; upon interaction with the DnaJ-bound protein, DnaK hydrolyzes its bound ATP, resulting in the formation of a stable complex. GrpE releases ADP from DnaK; ATP binding to DnaK triggers the release of the substrate protein, thus completing the reaction cycle. Several rounds of ATP-dependent interactions between DnaJ, DnaK and GrpE are required for fully efficient folding. This Meiothermus ruber protein is Protein GrpE.